A 238-amino-acid chain; its full sequence is RNA-binding protein pno1 (238 aa).

The KH domain maps to 162 to 211 (QSRAIGRLAGKGGRTKFTIENVTKTRIVLADSKIHILGSYQNIQLARRAI).

The protein belongs to the PNO1 family.

The protein localises to the nucleus. Its subcellular location is the nucleolus. The polypeptide is RNA-binding protein pno1 (l(1)G0004) (Drosophila pseudoobscura pseudoobscura (Fruit fly)).